The sequence spans 196 residues: Pyridoxal 5'-phosphate synthase subunit PdxT (196 aa).

Residue 47–49 (GES) participates in L-glutamine binding. Cys79 functions as the Nucleophile in the catalytic mechanism. L-glutamine-binding positions include Arg106 and 134 to 135 (IR). Active-site charge relay system residues include His170 and Glu172.

This sequence belongs to the glutaminase PdxT/SNO family. As to quaternary structure, in the presence of PdxS, forms a dodecamer of heterodimers. Only shows activity in the heterodimer.

The catalysed reaction is aldehydo-D-ribose 5-phosphate + D-glyceraldehyde 3-phosphate + L-glutamine = pyridoxal 5'-phosphate + L-glutamate + phosphate + 3 H2O + H(+). It carries out the reaction L-glutamine + H2O = L-glutamate + NH4(+). Its pathway is cofactor biosynthesis; pyridoxal 5'-phosphate biosynthesis. Its function is as follows. Catalyzes the hydrolysis of glutamine to glutamate and ammonia as part of the biosynthesis of pyridoxal 5'-phosphate. The resulting ammonia molecule is channeled to the active site of PdxS. This chain is Pyridoxal 5'-phosphate synthase subunit PdxT, found in Bacillus subtilis (strain 168).